Here is a 250-residue protein sequence, read N- to C-terminus: Osmotin-like protein OSML15 (250 aa).

An N-terminal signal peptide occupies residues 1–21 (MSHLTTCLVFFLLAFVTYTNA). 8 disulfides stabilise this stretch: Cys31–Cys226, Cys73–Cys83, Cys88–Cys94, Cys142–Cys214, Cys147–Cys197, Cys155–Cys165, Cys169–Cys178, and Cys179–Cys184.

Belongs to the thaumatin family.

The sequence is that of Osmotin-like protein OSML15 from Solanum commersonii (Commerson's wild potato).